Reading from the N-terminus, the 307-residue chain is Regulating synaptic membrane exocytosis protein 3 (307 aa).

Positions 86-120 (STETGIAVEMRSRVTRQGSRESTDGSTNSNSSEGT) are disordered. Polar residues predominate over residues 109-119 (DGSTNSNSSEG). Residues 155–273 (PMGDVHIAIM…DLSAAVTGWY (119 aa)) enclose the C2 domain. 2 positions are modified to phosphoserine: Ser-294 and Ser-297.

Binds PPFIA3. Does not bind RAB3.

It is found in the synapse. Functionally, regulates synaptic membrane exocytosis. The chain is Regulating synaptic membrane exocytosis protein 3 (Rims3) from Mus musculus (Mouse).